The chain runs to 355 residues: Probable dual-specificity RNA methyltransferase RlmN (355 aa).

The Proton acceptor role is filled by E89. Positions 95-322 (YENRKTVCLS…KRLGVPTSIR (228 aa)) constitute a Radical SAM core domain. The cysteines at positions 102 and 333 are disulfide-linked. [4Fe-4S] cluster contacts are provided by C109, C113, and C116. Residues 159 to 160 (GE), S191, 214 to 216 (SLH), and N290 contribute to the S-adenosyl-L-methionine site. C333 (S-methylcysteine intermediate) is an active-site residue.

The protein belongs to the radical SAM superfamily. RlmN family. [4Fe-4S] cluster serves as cofactor.

The protein localises to the cytoplasm. The catalysed reaction is adenosine(2503) in 23S rRNA + 2 reduced [2Fe-2S]-[ferredoxin] + 2 S-adenosyl-L-methionine = 2-methyladenosine(2503) in 23S rRNA + 5'-deoxyadenosine + L-methionine + 2 oxidized [2Fe-2S]-[ferredoxin] + S-adenosyl-L-homocysteine. The enzyme catalyses adenosine(37) in tRNA + 2 reduced [2Fe-2S]-[ferredoxin] + 2 S-adenosyl-L-methionine = 2-methyladenosine(37) in tRNA + 5'-deoxyadenosine + L-methionine + 2 oxidized [2Fe-2S]-[ferredoxin] + S-adenosyl-L-homocysteine. Functionally, specifically methylates position 2 of adenine 2503 in 23S rRNA and position 2 of adenine 37 in tRNAs. This is Probable dual-specificity RNA methyltransferase RlmN from Thermus thermophilus (strain ATCC 27634 / DSM 579 / HB8).